The chain runs to 239 residues: Alpha-acetolactate decarboxylase (239 aa).

The protein belongs to the alpha-acetolactate decarboxylase family.

It catalyses the reaction (2S)-2-acetolactate + H(+) = (R)-acetoin + CO2. Its pathway is polyol metabolism; (R,R)-butane-2,3-diol biosynthesis; (R,R)-butane-2,3-diol from pyruvate: step 2/3. With respect to regulation, the enzyme is active only in the presence of branched-chain amino acids. Valine results in much higher activation than leucine or isoleucine. Its function is as follows. Converts acetolactate into acetoin. Regulates leucine and valine biosynthesis by diverting the flux of alpha-acetolactate towards acetoin when the branched-chain amino acids are present in high concentration. The sequence is that of Alpha-acetolactate decarboxylase (aldC) from Streptococcus thermophilus.